The primary structure comprises 216 residues: Phosphatidylserine decarboxylase proenzyme (216 aa).

The active-site Schiff-base intermediate with substrate; via pyruvic acid is the serine 182. Serine 182 carries the pyruvic acid (Ser); by autocatalysis modification.

This sequence belongs to the phosphatidylserine decarboxylase family. PSD-A subfamily. As to quaternary structure, heterodimer of a large membrane-associated beta subunit and a small pyruvoyl-containing alpha subunit. The cofactor is pyruvate. Is synthesized initially as an inactive proenzyme. Formation of the active enzyme involves a self-maturation process in which the active site pyruvoyl group is generated from an internal serine residue via an autocatalytic post-translational modification. Two non-identical subunits are generated from the proenzyme in this reaction, and the pyruvate is formed at the N-terminus of the alpha chain, which is derived from the carboxyl end of the proenzyme. The post-translation cleavage follows an unusual pathway, termed non-hydrolytic serinolysis, in which the side chain hydroxyl group of the serine supplies its oxygen atom to form the C-terminus of the beta chain, while the remainder of the serine residue undergoes an oxidative deamination to produce ammonia and the pyruvoyl prosthetic group on the alpha chain.

The protein localises to the cell membrane. The catalysed reaction is a 1,2-diacyl-sn-glycero-3-phospho-L-serine + H(+) = a 1,2-diacyl-sn-glycero-3-phosphoethanolamine + CO2. It functions in the pathway phospholipid metabolism; phosphatidylethanolamine biosynthesis; phosphatidylethanolamine from CDP-diacylglycerol: step 2/2. In terms of biological role, catalyzes the formation of phosphatidylethanolamine (PtdEtn) from phosphatidylserine (PtdSer). The sequence is that of Phosphatidylserine decarboxylase proenzyme from Burkholderia mallei (strain NCTC 10247).